We begin with the raw amino-acid sequence, 189 residues long: Molybdenum cofactor guanylyltransferase (189 aa).

GTP is bound by residues 10–12, lysine 23, asparagine 51, aspartate 69, and aspartate 99; that span reads LAG. Aspartate 99 serves as a coordination point for Mg(2+).

The protein belongs to the MobA family. As to quaternary structure, monomer. Requires Mg(2+) as cofactor.

It localises to the cytoplasm. It carries out the reaction Mo-molybdopterin + GTP + H(+) = Mo-molybdopterin guanine dinucleotide + diphosphate. Its function is as follows. Transfers a GMP moiety from GTP to Mo-molybdopterin (Mo-MPT) cofactor (Moco or molybdenum cofactor) to form Mo-molybdopterin guanine dinucleotide (Mo-MGD) cofactor. This chain is Molybdenum cofactor guanylyltransferase, found in Pasteurella multocida (strain Pm70).